We begin with the raw amino-acid sequence, 224 residues long: Thymidine kinase, cytosolic (224 aa).

Serine 13 is modified (phosphoserine). ATP-binding positions include 26–33 (GPMFSGKS), 58–60 (DTR), and 98–101 (DEGQ). Residue glutamate 99 is the Proton acceptor of the active site. Residue phenylalanine 129 participates in substrate binding. Residues cysteine 154 and cysteine 157 each coordinate Zn(2+). Residues 173 to 177 (VEVIG) and tyrosine 182 contribute to the substrate site. Zn(2+)-binding residues include cysteine 186 and cysteine 189. Positions 203 to 205 (KEN) match the KEN box motif.

Belongs to the thymidine kinase family. Homotetramer. Tetramerization from dimerization is induced by ATP and increases catalytic efficiency due to a high affinity for thymidine. Tetramerization is inhibited by phosphorylation at Ser-13. Interacts (via the KEN box) with FZR1. Post-translationally, phosphorylated on Ser-13 in mitosis. Phosphorylation of Ser-13 by CDK1 during mitosis reduces homotetramerization and catalytic efficiency when DNA replication is complete and intracellular TK1 is still present at a high level. Polyubiquitinated. Postmitosis, ubiquitination leads to proteasomal degradation. The KEN box sequence located at the C-terminal region targets for degradation by the anaphase promoting complex (APC/C) activated and rate-limited by FZR1.

The protein localises to the cytoplasm. It carries out the reaction thymidine + ATP = dTMP + ADP + H(+). In terms of biological role, cell-cycle-regulated enzyme of importance in nucleotide metabolism. Catalyzes the first enzymatic step in the salvage pathway converting thymidine into thymidine monophosphate. Transcriptional regulation limits expression to the S phase of the cell cycle and transient expression coincides with the oscillation in the intracellular dTTP concentration. This chain is Thymidine kinase, cytosolic (TK1), found in Gallus gallus (Chicken).